Here is a 363-residue protein sequence, read N- to C-terminus: Melanoma-associated antigen B16 (363 aa).

A disordered region spans residues 33–124 (EPCSSPHLMA…PDQSDSTDLP (92 aa)). The span at 82–97 (ASTSSDLQHPYDSSSE) shows a compositional bias: low complexity. Residues 128 to 327 (VDGKVDFLVN…TVFLSQYEEA (200 aa)) enclose the MAGE domain. A disordered region spans residues 342–363 (HADSSSTSGESSSDTSSNFSQV).

The chain is Melanoma-associated antigen B16 (Mageb16) from Mus musculus (Mouse).